The chain runs to 421 residues: Replication-associated recombination protein A (421 aa).

Position 45-52 (45-52 (GPPGIGKT)) interacts with ATP.

The protein belongs to the AAA ATPase family. RarA/MGS1/WRNIP1 subfamily. As to quaternary structure, homotetramer. Interacts with single-stranded binding protein SsbA. May interact with PriA.

The protein localises to the cytoplasm. It is found in the nucleoid. Its activity is regulated as follows. ssDNA-dependent ATP hydrolysis is stimulated by single-stranded binding protein SsbA but not by SsbB; in the presence of SsbB, ssDNA secondary structure is removed and RarA's ATPase activity is decreased. The C-terminal 9 residues of SsbA are sufficient to stimulate ATPase activity. In terms of biological role, plays a role in recombination-dependent DNA replication. Positively affects the formation of RecA threads during response to DNA damage, directly or indirectly counteracting the negative RecA modulators RecX and RecU. Stabilizes a RecA-ssDNA complex. In vitro, in the presence of SsbA, inhibits PriA-dependent DNA replication restart of both leading and lagging strands; elongation is insensitive to RarA. Plays a role in response to DNA damage, localizes to the replication fork but also to DNA elsewhere in the cell. Probably required for repair of single-stranded nicks generated by H(2)O(2). Epistatic to RecA, partially represses deletions of the error-prone translesion DNA polymerases (dinB1 and dinB2), genetically interacts with replicative helicase loaders dnaB and dnaD. Epistatic to recF and recO mutations upon DNA damage. A DNA-dependent ATPase stimulated by hairpin structures in circular single-stranded (ss)DNA or ssDNA-dsDNA junctions, by blunt end and 5'-tailed dsDNA and by single-stranded binding protein SsbA protein bound to ssDNA. Preferentially binds ssDNA and replication-fork structures; SsbA stimulates binding to ssDNA. Addition of ATP to the protein has no visible effect in vitro. In Bacillus subtilis (strain 168), this protein is Replication-associated recombination protein A.